Here is a 350-residue protein sequence, read N- to C-terminus: LysM domain-containing GPI-anchored protein 2 (350 aa).

The N-terminal stretch at 1 to 23 is a signal peptide; that stretch reads METSCFTLLGLLVSLSFFLTLSA. Residues Asn-30, Asn-48, Asn-76, and Asn-99 are each glycosylated (N-linked (GlcNAc...) asparagine). Cystine bridges form between Cys-31/Cys-97, Cys-38/Cys-161, Cys-95/Cys-159, and Cys-97/Cys-161. 2 consecutive LysM domains span residues 108-155 and 172-216; these read IEYT…KFWI and YAHV…PLDV. Chitin-binding positions include 114-120 and 142-149; these read KDDILSF and PDPNKIEI. N-linked (GlcNAc...) asparagine glycans are attached at residues Asn-193, Asn-238, Asn-258, Asn-289, and Asn-305. 2 disulfide bridges follow: Cys-221-Cys-253 and Cys-248-Cys-277. A lipid anchor (GPI-anchor amidated aspartate) is attached at Asp-318. Residues 319–350 constitute a propeptide, removed in mature form; sequence SAGPDNYASTLSSSFNFVIVLIQCALLCLCLL.

Forms homooligomers. Interacts with CERK1. Binds to chitin oligosaccharide elicitor.

It is found in the cell membrane. Functionally, chitin elicitor-binding protein involved in the perception of chitin oligosaccharide elicitor. The protein is LysM domain-containing GPI-anchored protein 2 (LYM2) of Arabidopsis thaliana (Mouse-ear cress).